We begin with the raw amino-acid sequence, 195 residues long: Anaphase-promoting complex subunit 10 (195 aa).

A disordered region spans residues 1 to 21 (MAASMDEDITANPPPSSEEDP). The DOC domain occupies 9–193 (ITANPPPSSE…GTVDFQKFAT (185 aa)).

This sequence belongs to the APC10 family. The APC is composed of at least 11 subunits.

Functionally, component of the anaphase promoting complex/cyclosome (APC/C), a cell cycle-regulated ubiquitin ligase that controls progression through mitosis and the G1 phase of the cell cycle. The chain is Anaphase-promoting complex subunit 10 (APC10) from Drosophila melanogaster (Fruit fly).